A 372-amino-acid polypeptide reads, in one-letter code: Mitogen-activated protein kinase homolog NTF3 (372 aa).

Positions 32 to 319 constitute a Protein kinase domain; it reads YVPIKPIGRG…VIEALQHPYM (288 aa). Residues 38–46 and lysine 61 contribute to the ATP site; that span reads IGRGAYGIV. Aspartate 158 functions as the Proton acceptor in the catalytic mechanism. Phosphothreonine is present on threonine 191. Residues 191–193 carry the TXY motif; the sequence is TEY. Residue tyrosine 193 is modified to Phosphotyrosine.

This sequence belongs to the protein kinase superfamily. CMGC Ser/Thr protein kinase family. MAP kinase subfamily. Mg(2+) is required as a cofactor. In terms of processing, dually phosphorylated on Thr-191 and Tyr-193, which activates the enzyme. Very low autophosphorylation, although dramatically increased when Mn(2+) is added to the reaction instead of Mg(2+). Ubiquitous.

It catalyses the reaction L-seryl-[protein] + ATP = O-phospho-L-seryl-[protein] + ADP + H(+). The enzyme catalyses L-threonyl-[protein] + ATP = O-phospho-L-threonyl-[protein] + ADP + H(+). With respect to regulation, activated by tyrosine and threonine phosphorylation. This chain is Mitogen-activated protein kinase homolog NTF3 (NTF3), found in Nicotiana tabacum (Common tobacco).